A 382-amino-acid chain; its full sequence is 1-deoxy-D-xylulose 5-phosphate reductoisomerase (382 aa).

NADPH is bound by residues Thr-10, Gly-11, Ser-12, Ile-13, Gly-36, and Asn-122. Lys-123 provides a ligand contact to 1-deoxy-D-xylulose 5-phosphate. Glu-124 serves as a coordination point for NADPH. Asp-148 contributes to the Mn(2+) binding site. 1-deoxy-D-xylulose 5-phosphate-binding residues include Ser-149, Glu-150, Ser-174, and His-197. Glu-150 is a binding site for Mn(2+). Gly-203 contributes to the NADPH binding site. 1-deoxy-D-xylulose 5-phosphate contacts are provided by Ser-210, Asn-215, Lys-216, and Glu-219. Glu-219 contributes to the Mn(2+) binding site.

The protein belongs to the DXR family. Requires Mg(2+) as cofactor. It depends on Mn(2+) as a cofactor.

The catalysed reaction is 2-C-methyl-D-erythritol 4-phosphate + NADP(+) = 1-deoxy-D-xylulose 5-phosphate + NADPH + H(+). It participates in isoprenoid biosynthesis; isopentenyl diphosphate biosynthesis via DXP pathway; isopentenyl diphosphate from 1-deoxy-D-xylulose 5-phosphate: step 1/6. Its function is as follows. Catalyzes the NADPH-dependent rearrangement and reduction of 1-deoxy-D-xylulose-5-phosphate (DXP) to 2-C-methyl-D-erythritol 4-phosphate (MEP). This is 1-deoxy-D-xylulose 5-phosphate reductoisomerase from Chlorobaculum tepidum (strain ATCC 49652 / DSM 12025 / NBRC 103806 / TLS) (Chlorobium tepidum).